Reading from the N-terminus, the 291-residue chain is ATP synthase gamma chain (291 aa).

This sequence belongs to the ATPase gamma chain family. F-type ATPases have 2 components, CF(1) - the catalytic core - and CF(0) - the membrane proton channel. CF(1) has five subunits: alpha(3), beta(3), gamma(1), delta(1), epsilon(1). CF(0) has three main subunits: a, b and c.

It localises to the cell inner membrane. Functionally, produces ATP from ADP in the presence of a proton gradient across the membrane. The gamma chain is believed to be important in regulating ATPase activity and the flow of protons through the CF(0) complex. The protein is ATP synthase gamma chain of Neisseria meningitidis serogroup B (strain ATCC BAA-335 / MC58).